A 234-amino-acid polypeptide reads, in one-letter code: Ribosomal RNA small subunit methyltransferase G (234 aa).

S-adenosyl-L-methionine is bound by residues Gly-96, Leu-101, 119–121 (DAT), 147–148 (VE), and Arg-161.

This sequence belongs to the methyltransferase superfamily. RNA methyltransferase RsmG family.

It is found in the cytoplasm. In terms of biological role, specifically methylates the N7 position of a guanine in 16S rRNA. This Chlorobium chlorochromatii (strain CaD3) protein is Ribosomal RNA small subunit methyltransferase G.